Consider the following 142-residue polypeptide: Protein KNATM (142 aa).

Residues 4–36 (KKDENSILENMKQEINHSLKEEAQEEEEILKKR) adopt a coiled-coil conformation.

As to quaternary structure, interacts with KNAT1, KNAT3, KNAT4, BEL1, BLH2, BLH4 and BLH9, but not with BLH8 or the KNATM-A and KNATM-C isoforms. Isoforms KNATM-A and KNATM-C: no interactions with KNATM-B, KNOXX or BELL proteins. In terms of tissue distribution, detected in inflorescences, seedlings, leaves, hydathodes, stems, roots, embryo and siliques. Expressed in a polar pattern in organ primordia and at the boundary of mature organs. Detected in the lateral domains of flower meristems, but not in the inflorescence meristem or the vegetative shoot apical meristem.

Its subcellular location is the cytoplasm. It is found in the nucleus. Functionally, transcriptional regulator involved in leaf proximal/distal patterning. May act by sequestering BELL transcription factors. The sequence is that of Protein KNATM from Arabidopsis thaliana (Mouse-ear cress).